Consider the following 436-residue polypeptide: Probable cinnamyl alcohol dehydrogenase 8B (436 aa).

Residue cysteine 120 participates in Zn(2+) binding. An NADP(+)-binding site is contributed by threonine 122. Residues histidine 142, glutamate 143, cysteine 173, cysteine 176, cysteine 179, cysteine 187, and cysteine 236 each contribute to the Zn(2+) site. NADP(+) contacts are provided by residues threonine 240, 261–266 (GLGGLG), 284–289 (STSPGK), threonine 324, glycine 348, and 371–373 (NCV).

The protein belongs to the zinc-containing alcohol dehydrogenase family. As to quaternary structure, homodimer. Requires Zn(2+) as cofactor.

The catalysed reaction is (E)-cinnamyl alcohol + NADP(+) = (E)-cinnamaldehyde + NADPH + H(+). The enzyme catalyses (E)-coniferol + NADP(+) = (E)-coniferaldehyde + NADPH + H(+). It carries out the reaction (E)-sinapyl alcohol + NADP(+) = (E)-sinapaldehyde + NADPH + H(+). It catalyses the reaction (E)-4-coumaroyl alcohol + NADP(+) = (E)-4-coumaraldehyde + NADPH + H(+). The catalysed reaction is (E)-caffeyl alcohol + NADP(+) = (E)-caffeyl aldehyde + NADPH + H(+). Its pathway is aromatic compound metabolism; phenylpropanoid biosynthesis. Its function is as follows. Involved in lignin biosynthesis. Catalyzes the final step specific for the production of lignin monomers. Catalyzes the NADPH-dependent reduction of coniferaldehyde, 5-hydroxyconiferaldehyde, sinapaldehyde, 4-coumaraldehyde and caffeyl aldehyde to their respective alcohols. The sequence is that of Probable cinnamyl alcohol dehydrogenase 8B from Oryza sativa subsp. japonica (Rice).